The primary structure comprises 628 residues: Chaperone protein DnaK (628 aa).

A Phosphothreonine; by autocatalysis modification is found at threonine 174. The segment at 589–628 (AAGGAGPDMGAGAGPDMGAGASNGSAPYGDDVVDGDYKEV) is disordered. Over residues 591–605 (GGAGPDMGAGAGPDM) the composition is skewed to gly residues.

Belongs to the heat shock protein 70 family.

Functionally, acts as a chaperone. The chain is Chaperone protein DnaK from Lachnospira eligens (strain ATCC 27750 / DSM 3376 / VPI C15-48 / C15-B4) (Eubacterium eligens).